A 75-amino-acid chain; its full sequence is U6-lycotoxin-Ls1e (75 aa).

Positions 1–21 are cleaved as a signal peptide; that stretch reads MKLLLFTALVLVVISLIEVEA. The propeptide occupies 22-25; the sequence is ENER.

It belongs to the neurotoxin 19 (CSTX) family. 06 (U6-Lctx) subfamily. Post-translationally, contains 4 disulfide bonds. In terms of tissue distribution, expressed by the venom gland.

It localises to the secreted. The chain is U6-lycotoxin-Ls1e from Lycosa singoriensis (Wolf spider).